Here is a 216-residue protein sequence, read N- to C-terminus: UPF0193 protein EVG1 homolog (216 aa).

Belongs to the UPF0193 (EVG1) family.

This chain is UPF0193 protein EVG1 homolog, found in Mus musculus (Mouse).